The chain runs to 481 residues: GDP-fucose protein O-fucosyltransferase 2 (481 aa).

A signal peptide spans 1 to 22 (MKGRAHIWVALLLACLPPRFRN). GDP-beta-L-fucose is bound by residues 59–63 (GEGFN), 287–289 (HLR), aspartate 365, and 382–383 (RF). The active-site Proton acceptor is the glutamate 60.

Belongs to the glycosyltransferase 68 family.

The protein localises to the endoplasmic reticulum. It catalyses the reaction L-seryl-[protein] + GDP-beta-L-fucose = 3-O-(alpha-L-fucosyl)-L-seryl-[protein] + GDP + H(+). The enzyme catalyses L-threonyl-[protein] + GDP-beta-L-fucose = 3-O-(alpha-L-fucosyl)-L-threonyl-[protein] + GDP + H(+). The protein operates within protein modification; protein glycosylation. In terms of biological role, catalyzes the reaction that attaches fucose through an O-glycosidic linkage to a conserved serine or threonine residue in the consensus sequence C1-X-X-S/T-C2 of thrombospondin type I repeats (TSRs) where C1 and C2 are the first and second cysteines of the repeat, respectively. O-fucosylates sporozoite proteins CSP and TRAP. O-fucosylation regulates stability and intracellular trafficking of TRAP but not of CSP. Probably by regulating protein O-fucosylation, may play a role in parasite transmission to the mosquito vector and/or infection of the vertebrate host hepatocytes; however, POFUT2 involvement in transmission/infection is controversial. The chain is GDP-fucose protein O-fucosyltransferase 2 from Plasmodium vivax (strain Salvador I).